Reading from the N-terminus, the 563-residue chain is Mitochondrial distribution and morphology protein 34 (563 aa).

In terms of domain architecture, SMP-LTD spans 1 to 195 (MAFNFNWSPL…LPAIIHRLSL (195 aa)). Disordered regions lie at residues 298–460 (ERGD…QIPT) and 535–563 (RHDK…PKAL). 2 stretches are compositionally biased toward polar residues: residues 303-332 (AGTT…FSNR) and 346-357 (SLVNMNSATTGL). Over residues 365–383 (SRSHTTRKKKNRVVNLRKS) the composition is skewed to basic residues. Composition is skewed to polar residues over residues 386-402 (TDNV…SITA) and 444-460 (PSRS…QIPT).

It belongs to the MDM34 family. In terms of assembly, component of the ER-mitochondria encounter structure (ERMES) or MDM complex, composed of mmm1, mdm10, mdm12 and mdm34.

Its subcellular location is the mitochondrion outer membrane. In terms of biological role, component of the ERMES/MDM complex, which serves as a molecular tether to connect the endoplasmic reticulum (ER) and mitochondria. Components of this complex are involved in the control of mitochondrial shape and protein biogenesis, and function in nonvesicular lipid trafficking between the ER and mitochondria. Mdm34 is required for the interaction of the ER-resident membrane protein mmm1 and the outer mitochondrial membrane-resident beta-barrel protein mdm10. This is Mitochondrial distribution and morphology protein 34 from Sclerotinia sclerotiorum (strain ATCC 18683 / 1980 / Ss-1) (White mold).